Reading from the N-terminus, the 184-residue chain is Bifunctional protein PyrR (184 aa).

The short motif at 98-110 (VVLVDDVLYTGRT) is the PRPP-binding element.

This sequence belongs to the purine/pyrimidine phosphoribosyltransferase family. PyrR subfamily.

The catalysed reaction is UMP + diphosphate = 5-phospho-alpha-D-ribose 1-diphosphate + uracil. Functionally, regulates the transcription of the pyrimidine nucleotide (pyr) operon in response to exogenous pyrimidines. Also displays a weak uracil phosphoribosyltransferase activity which is not physiologically significant. The sequence is that of Bifunctional protein PyrR from Roseiflexus castenholzii (strain DSM 13941 / HLO8).